A 270-amino-acid chain; its full sequence is Tetraspanin-17 (270 aa).

At 1–19 the chain is on the cytoplasmic side; sequence MPGKHQHFQEPEVGCCGKY. The chain crosses the membrane as a helical span at residues 20-40; it reads FLFGFNIVFWVLGALFLAIGL. At 41-63 the chain is on the extracellular side; it reads WAWGEKGVLSNISALTDLGGLDP. Residue N51 is glycosylated (N-linked (GlcNAc...) asparagine). A helical transmembrane segment spans residues 64–84; it reads VWLFVVVGGVMSVLGFAGCIG. The Cytoplasmic portion of the chain corresponds to 85–94; that stretch reads ALRENTFLLK. Residues 95–115 form a helical membrane-spanning segment; it reads FFSVFLGLIFFLELATGILAF. Over 116–234 the chain is Extracellular; the sequence is VFKDWIRDQL…GQFEKWLQDN (119 aa). Disulfide bonds link C155–C223, C156–C188, C172–C182, and C189–C202. An N-linked (GlcNAc...) asparagine glycan is attached at N171. A helical transmembrane segment spans residues 235–255; it reads LIVVAGVFMGIALLQIFGICL. The Cytoplasmic segment spans residues 256–270; it reads AQNLVSDIKAVKANW.

It belongs to the tetraspanin (TM4SF) family. Interacts with ADAM10; the interaction influences ADAM10 substrate specificity, endocytosis and turnover.

It localises to the cell membrane. In terms of biological role, part of TspanC8 subgroup, composed of 6 members that interact with the transmembrane metalloprotease ADAM10. This interaction is required for ADAM10 exit from the endoplasmic reticulum and for enzymatic maturation and trafficking to the cell surface as well as substrate specificity. Different TspanC8/ADAM10 complexes have distinct substrates. Seems to regulate VE-cadherin expression in endothelial cells probably through interaction with ADAM10, promoting leukocyte transmigration. The chain is Tetraspanin-17 from Homo sapiens (Human).